A 134-amino-acid polypeptide reads, in one-letter code: MRMLLNLSLLALGAAYVSAFAVENPMNRLVAETLTLLSTHRTWLIGDGNLMIPTPENKNHQLCIKEVFQGIDTLKNQTAHGEAVDKLFQNLSLIKEHIERQKKRCAGERWRVTKFLDYLQVFLGVINTEWTPES.

The signal sequence occupies residues 1–21; it reads MRMLLNLSLLALGAAYVSAFA. N-linked (GlcNAc...) asparagine glycans are attached at residues N76 and N90.

Belongs to the IL-5 family. As to quaternary structure, homodimer; disulfide-linked. Interacts with IL5RA. Interacts with CSF2RB.

It is found in the secreted. In terms of biological role, homodimeric cytokine expressed predominantly by T-lymphocytes and NK cells that plays an important role in the survival, differentiation, and chemotaxis of eosinophils. Also acts on activated and resting B-cells to induce immunoglobulin production, growth, and differentiation. Mechanistically, exerts its biological effects through a receptor composed of IL5RA subunit and the cytokine receptor common subunit beta/CSF2RB. Binding to the receptor leads to activation of various kinases including LYN, SYK and JAK2 and thereby propagates signals through the RAS-MAPK and JAK-STAT5 pathways respectively. In Canis lupus familiaris (Dog), this protein is Interleukin-5 (IL5).